Here is an 89-residue protein sequence, read N- to C-terminus: Small ribosomal subunit protein uS15 (89 aa).

Basic and acidic residues predominate over residues 1–10 (MPLNTEKKQE). The disordered stretch occupies residues 1–22 (MPLNTEKKQELINSHQTHATDT). Residues 11–22 (LINSHQTHATDT) show a composition bias toward polar residues.

Belongs to the universal ribosomal protein uS15 family. As to quaternary structure, part of the 30S ribosomal subunit. Forms a bridge to the 50S subunit in the 70S ribosome, contacting the 23S rRNA.

One of the primary rRNA binding proteins, it binds directly to 16S rRNA where it helps nucleate assembly of the platform of the 30S subunit by binding and bridging several RNA helices of the 16S rRNA. Functionally, forms an intersubunit bridge (bridge B4) with the 23S rRNA of the 50S subunit in the ribosome. The sequence is that of Small ribosomal subunit protein uS15 from Synechococcus sp. (strain RCC307).